We begin with the raw amino-acid sequence, 136 residues long: UPF0216 protein PF0452 (136 aa).

The protein belongs to the UPF0216 family.

The protein is UPF0216 protein PF0452 of Pyrococcus furiosus (strain ATCC 43587 / DSM 3638 / JCM 8422 / Vc1).